Here is a 176-residue protein sequence, read N- to C-terminus: RNA pyrophosphohydrolase (176 aa).

A Nudix hydrolase domain is found at 6–149; that stretch reads GYRPNVGIIL…KRQVYQQALF (144 aa). The Nudix box signature appears at 38-59; that stretch reads GGIKHGESPEQAMFRELFEEVG.

The protein belongs to the Nudix hydrolase family. RppH subfamily. The cofactor is a divalent metal cation.

Its function is as follows. Accelerates the degradation of transcripts by removing pyrophosphate from the 5'-end of triphosphorylated RNA, leading to a more labile monophosphorylated state that can stimulate subsequent ribonuclease cleavage. The chain is RNA pyrophosphohydrolase from Aromatoleum aromaticum (strain DSM 19018 / LMG 30748 / EbN1) (Azoarcus sp. (strain EbN1)).